The primary structure comprises 598 residues: Integrator complex subunit 11 (598 aa).

Zn(2+) is bound by residues His68, His70, Asp72, His73, His157, and Asp178. The HXHXDH motif signature appears at 68–73 (HFHLDH). Glu203 is an active-site residue. His414 contacts Zn(2+). The Nuclear localization signal signature appears at 470-480 (PLPDAKRPRTM).

This sequence belongs to the metallo-beta-lactamase superfamily. RNA-metabolizing metallo-beta-lactamase-like family. INTS11 subfamily. As to quaternary structure, component of the Integrator complex, composed of core subunits INTS1, INTS2, INTS3, INTS4, INTS5, INTS6, INTS7, INTS8, INTS9/RC74, INTS10, INTS11/CPSF3L, INTS12, INTS13, INTS14 and INTS15. The core complex associates with protein phosphatase 2A subunits PPP2CA and PPP2R1A, to form the Integrator-PP2A (INTAC) complex. INTS11 is part of the RNA endonuclease subcomplex, composed of INTS4, INTS9, INTS11 and inositol hexakisphosphate (InsP6). The cofactor is Zn(2+).

Its subcellular location is the nucleus. The protein resides in the cytoplasm. Its function is as follows. RNA endonuclease component of the integrator complex, a multiprotein complex that terminates RNA polymerase II (Pol II) transcription in the promoter-proximal region of genes. The integrator complex provides a quality checkpoint during transcription elongation by driving premature transcription termination of transcripts that are unfavorably configured for transcriptional elongation: the complex terminates transcription by (1) catalyzing dephosphorylation of the C-terminal domain (CTD) of Pol II subunit POLR2A/RPB1 and SUPT5H/SPT5, (2) degrading the exiting nascent RNA transcript via endonuclease activity and (3) promoting the release of Pol II from bound DNA. The integrator complex is also involved in terminating the synthesis of non-coding Pol II transcripts, such as enhancer RNAs (eRNAs), small nuclear RNAs (snRNAs), telomerase RNAs and long non-coding RNAs (lncRNAs). Within the integrator complex, INTS11 constitutes the RNA endonuclease subunit that degrades exiting nascent RNA transcripts. This chain is Integrator complex subunit 11 (cpsf3l), found in Danio rerio (Zebrafish).